The following is a 132-amino-acid chain: Small ribosomal subunit protein uS11 (132 aa).

The segment at 113-132 (VTPIPHDGTRAPGGKRGRRV) is disordered.

Belongs to the universal ribosomal protein uS11 family. In terms of assembly, part of the 30S ribosomal subunit.

Its function is as follows. Located on the platform of the 30S subunit. This Methanocella arvoryzae (strain DSM 22066 / NBRC 105507 / MRE50) protein is Small ribosomal subunit protein uS11.